An 800-amino-acid polypeptide reads, in one-letter code: Receptor like protein 26 (800 aa).

The N-terminal stretch at 1-19 (MRLHFCSLLLLYCIVFVSS) is a signal peptide. The Extracellular portion of the chain corresponds to 20–733 (FLTTDALACL…EEEDEVIEWK (714 aa)). Asn-49, Asn-61, Asn-83, Asn-96, Asn-101, and Asn-113 each carry an N-linked (GlcNAc...) asparagine glycan. 12 LRR repeats span residues 89–113 (LHQLRYLNLSHNNFTSSSLPSEFSN), 115–138 (TRLEVLSLASSSFTGQVPSSISNL), 139–161 (ILLTHLNLSHNELTGSFPPVRNL), 162–185 (TKLSFLDLSYNQFSGAIPFDLLPT), 187–212 (PFLSYLDLKKNHLTGSIDVPNSSSSS), 214–235 (LVRLSLGFNQFEGKIIEPISKL), 236–259 (INLNHLELASLNISHPIDLRVFAP), 260–281 (LKSLLVFDIRQNRLLPASLSSD), 285–307 (PLSLISLILIQCDIIEFPNIFKT), 308–332 (LQNLEHIDISNNLIKGKVPEWFWKL), 334–357 (RLSIANLVNNSLTGFEGSSEVLLN), and 358–381 (SSVQLLDFAYNSMTGAFPTPPLGS). N-linked (GlcNAc...) asparagine glycosylation is found at Asn-145 and Asn-160. Asn-207 carries N-linked (GlcNAc...) asparagine glycosylation. Asn-247 carries N-linked (GlcNAc...) asparagine glycosylation. Residues Asn-342 and Asn-357 are each glycosylated (N-linked (GlcNAc...) asparagine). Residues 382-401 (IYLSAWNNSFTGNIPLSICN) form an LRR 13; degenerate repeat. Asn-388 and Asn-401 each carry an N-linked (GlcNAc...) asparagine glycan. LRR repeat units lie at residues 402 to 423 (RSSLIVLDLSYNKFTGPIPQCL), 424 to 446 (SNLKVVNLRKNSLEGSIPDEFHS), 448 to 471 (AKTQTLDVGYNRLTGKLPKSLLNC), 472 to 494 (SSLRFLSVDNNRIEDTFPFWLKA), 495 to 519 (LPNLHVLTLRSNRFFGHLSPPDRGP), 522 to 546 (FPELRILELSDNSFTGSLPPNFFVN), 591 to 615 (LTFYSTIDFSGNKLEGQIPESIGLL), 616 to 639 (KELIALNLSNNAFTGHIPMSLANV), 640 to 663 (TELESLDLSRNQLSGNIPRELGSL), and 665 to 688 (FLAYISVAHNQLKGEIPQGPQFSG). An N-linked (GlcNAc...) asparagine glycan is attached at Asn-470. 2 N-linked (GlcNAc...) asparagine glycosylation sites follow: Asn-622 and Asn-638. Residues 734–754 (AVFFGYWPGLLLGLVMAHVIA) form a helical membrane-spanning segment. The Cytoplasmic segment spans residues 755–800 (SFKPKWFVKILGPAKGKQVDPVRLFMNLDSRWDSFNNKDTVEEEVI).

It belongs to the RLP family.

It is found in the cell membrane. This Arabidopsis thaliana (Mouse-ear cress) protein is Receptor like protein 26.